The primary structure comprises 792 residues: Alpha-1,6-mannosylglycoprotein 6-beta-N-acetylglucosaminyltransferase B (792 aa).

The Cytoplasmic segment spans residues 1–24; it reads MITVNPDGKIMVRRCLVTLRPFRL. The helical; Signal-anchor for type II membrane protein transmembrane segment at 25-45 threads the bilayer; sequence FVLGIGFFTLCFLMTSLGGQF. At 46 to 792 the chain is on the lumenal side; it reads SARRLGDSPF…GQVALCQGCL (747 aa). An N-linked (GlcNAc...) asparagine glycan is attached at N127. 9 disulfides stabilise this stretch: C157–C195, C168–C208, C184–C353, C387–C644, C700–C775, C704–C777, C711–C764, C732–C753, and C788–C791.

Belongs to the glycosyltransferase 18 family. Mn(2+) is required as a cofactor. Predominantly expressed in brain. Expressed in all areas of the adult and fetal brain. Also expressed at much lower levels in testis, spleen and thymus.

It is found in the golgi apparatus membrane. The catalysed reaction is N(4)-{beta-D-GlcNAc-(1-&gt;2)-[beta-D-GlcNAc-(1-&gt;4)]-alpha-D-Man-(1-&gt;3)-[beta-D-GlcNAc-(1-&gt;2)-alpha-D-Man-(1-&gt;6)]-beta-D-Man-(1-&gt;4)-beta-D-GlcNAc-(1-&gt;4)-beta-D-GlcNAc}-L-asparaginyl-[protein] + UDP-N-acetyl-alpha-D-glucosamine = N(4)-{beta-D-GlcNAc-(1-&gt;2)-[beta-D-GlcNAc-(1-&gt;4)]-alpha-D-Man-(1-&gt;3)-[beta-D-GlcNAc-(1-&gt;2)-[beta-D-GlcNAc-(1-&gt;6)]-alpha-D-Man-(1-&gt;6)]-beta-D-Man-(1-&gt;4)-beta-D-GlcNAc-(1-&gt;4)-beta-D-GlcNAc}-L-asparaginyl-[protein] + UDP + H(+). The enzyme catalyses 3-O-[N-acetyl-beta-D-glucosaminyl-(1-&gt;2)-alpha-D-mannosyl]-L-seryl-[protein] + UDP-N-acetyl-alpha-D-glucosamine = O(3)-{N-acetyl-beta-D-glucosaminyl-(1-&gt;2)-[N-acetyl-beta-D-glucosaminyl-(1-&gt;6)]-alpha-D-mannosyl}-L-seryl-[protein] + UDP + H(+). It catalyses the reaction 3-O-[N-acetyl-beta-D-glucosaminyl-(1-&gt;2)-alpha-D-mannosyl]-L-threonyl-[protein] + UDP-N-acetyl-alpha-D-glucosamine = O(3)-{N-acetyl-beta-D-glucosaminyl-(1-&gt;2)-[N-acetyl-beta-D-glucosaminyl-(1-&gt;6)]-alpha-D-mannosyl}-L-threonyl-[protein] + UDP + H(+). It functions in the pathway protein modification; protein glycosylation. Glycosyltransferase that acts on alpha-linked mannose of N-glycans and O-mannosyl glycans. Catalyzes the transfer of N-acetylglucosamine (GlcNAc) to the beta 1-6 linkage of the mannose residue of GlcNAc-beta1,2-Man-alpha on both the alpha1,3- and alpha1,6-linked mannose arms in the core structure of N-glycan. Also acts on the GlcNAc-beta1,2-Man-alpha1-Ser/Thr moiety, forming a 2,6-branched structure in brain O-mannosyl glycan. Plays an active role in modulating integrin and laminin-dependent adhesion and migration of neuronal cells via its activity in the O-mannosyl glycan pathway. In Homo sapiens (Human), this protein is Alpha-1,6-mannosylglycoprotein 6-beta-N-acetylglucosaminyltransferase B (MGAT5B).